A 366-amino-acid chain; its full sequence is tRNA/tmRNA (uracil-C(5))-methyltransferase (366 aa).

S-adenosyl-L-methionine is bound by residues glutamine 190, tyrosine 218, asparagine 223, glutamate 239, and aspartate 299. The active-site Nucleophile is cysteine 324. Catalysis depends on glutamate 358, which acts as the Proton acceptor.

Belongs to the class I-like SAM-binding methyltransferase superfamily. RNA M5U methyltransferase family. TrmA subfamily.

The catalysed reaction is uridine(54) in tRNA + S-adenosyl-L-methionine = 5-methyluridine(54) in tRNA + S-adenosyl-L-homocysteine + H(+). The enzyme catalyses uridine(341) in tmRNA + S-adenosyl-L-methionine = 5-methyluridine(341) in tmRNA + S-adenosyl-L-homocysteine + H(+). Dual-specificity methyltransferase that catalyzes the formation of 5-methyluridine at position 54 (m5U54) in all tRNAs, and that of position 341 (m5U341) in tmRNA (transfer-mRNA). In Salmonella arizonae (strain ATCC BAA-731 / CDC346-86 / RSK2980), this protein is tRNA/tmRNA (uracil-C(5))-methyltransferase.